We begin with the raw amino-acid sequence, 146 residues long: Large ribosomal subunit protein uL15 (146 aa).

A compositionally biased stretch (basic and acidic residues) spans 1 to 13 (MKLHELKPAEGSR). The disordered stretch occupies residues 1–56 (MKLHELKPAEGSRKVRNRVGRGAATGNGKTSGRGQKGQKARSGGSVRPGFEGGQLP). The segment covering 23-35 (AATGNGKTSGRGQ) has biased composition (gly residues).

This sequence belongs to the universal ribosomal protein uL15 family. In terms of assembly, part of the 50S ribosomal subunit.

In terms of biological role, binds to the 23S rRNA. The protein is Large ribosomal subunit protein uL15 of Staphylococcus saprophyticus subsp. saprophyticus (strain ATCC 15305 / DSM 20229 / NCIMB 8711 / NCTC 7292 / S-41).